The primary structure comprises 319 residues: Cobalamin biosynthesis protein CobD (319 aa).

3 helical membrane-spanning segments follow: residues 54–76, 154–173, and 301–318; these read VLLL…WLSY, GVTA…ALLY, and VLGF…IYAI.

This sequence belongs to the CobD/CbiB family.

Its subcellular location is the cell membrane. It functions in the pathway cofactor biosynthesis; adenosylcobalamin biosynthesis. Functionally, converts cobyric acid to cobinamide by the addition of aminopropanol on the F carboxylic group. This Halalkalibacterium halodurans (strain ATCC BAA-125 / DSM 18197 / FERM 7344 / JCM 9153 / C-125) (Bacillus halodurans) protein is Cobalamin biosynthesis protein CobD.